The primary structure comprises 347 residues: L-threonine 3-dehydrogenase (347 aa).

Cys-43 contributes to the Zn(2+) binding site. Catalysis depends on charge relay system residues Thr-45 and His-48. Zn(2+) is bound by residues His-68, Glu-69, Cys-98, Cys-101, Cys-104, and Cys-112. Residues Ile-180, Asp-200, Arg-205, 267–269, and 292–293 each bind NAD(+); these read LSL and IT.

This sequence belongs to the zinc-containing alcohol dehydrogenase family. In terms of assembly, homotetramer. The cofactor is Zn(2+).

The protein localises to the cytoplasm. It catalyses the reaction L-threonine + NAD(+) = (2S)-2-amino-3-oxobutanoate + NADH + H(+). The protein operates within amino-acid degradation; L-threonine degradation via oxydo-reductase pathway; glycine from L-threonine: step 1/2. Catalyzes the NAD(+)-dependent oxidation of L-threonine to 2-amino-3-ketobutyrate. This Bacillus subtilis (strain 168) protein is L-threonine 3-dehydrogenase.